A 138-amino-acid polypeptide reads, in one-letter code: Putative pre-16S rRNA nuclease (138 aa).

This sequence belongs to the YqgF nuclease family.

It is found in the cytoplasm. Its function is as follows. Could be a nuclease involved in processing of the 5'-end of pre-16S rRNA. This chain is Putative pre-16S rRNA nuclease, found in Karelsulcia muelleri (strain GWSS) (Sulcia muelleri).